A 194-amino-acid polypeptide reads, in one-letter code: Holliday junction branch migration complex subunit RuvA (194 aa).

The domain I stretch occupies residues 1–64 (MISRLTGKLV…EDAHLLFGFA (64 aa)). The tract at residues 65–143 (TAEERKTFRQ…AHAVTDGLFA (79 aa)) is domain II. The tract at residues 144-147 (AAPA) is flexible linker. The segment at 147-194 (AADETEDIVGTLLALGYSEREAKAAVKGVPEGTDVGEGVRLALKNLLK) is domain III.

Belongs to the RuvA family. As to quaternary structure, homotetramer. Forms an RuvA(8)-RuvB(12)-Holliday junction (HJ) complex. HJ DNA is sandwiched between 2 RuvA tetramers; dsDNA enters through RuvA and exits via RuvB. An RuvB hexamer assembles on each DNA strand where it exits the tetramer. Each RuvB hexamer is contacted by two RuvA subunits (via domain III) on 2 adjacent RuvB subunits; this complex drives branch migration. In the full resolvosome a probable DNA-RuvA(4)-RuvB(12)-RuvC(2) complex forms which resolves the HJ.

Its subcellular location is the cytoplasm. The RuvA-RuvB-RuvC complex processes Holliday junction (HJ) DNA during genetic recombination and DNA repair, while the RuvA-RuvB complex plays an important role in the rescue of blocked DNA replication forks via replication fork reversal (RFR). RuvA specifically binds to HJ cruciform DNA, conferring on it an open structure. The RuvB hexamer acts as an ATP-dependent pump, pulling dsDNA into and through the RuvAB complex. HJ branch migration allows RuvC to scan DNA until it finds its consensus sequence, where it cleaves and resolves the cruciform DNA. The protein is Holliday junction branch migration complex subunit RuvA of Neisseria meningitidis serogroup A / serotype 4A (strain DSM 15465 / Z2491).